The primary structure comprises 201 residues: Molybdenum cofactor guanylyltransferase (201 aa).

Residues 14-16 (LAG), Lys-31, and Asp-104 contribute to the GTP site. Asp-104 is a binding site for Mg(2+).

This sequence belongs to the MobA family. Monomer. Requires Mg(2+) as cofactor.

It is found in the cytoplasm. It catalyses the reaction Mo-molybdopterin + GTP + H(+) = Mo-molybdopterin guanine dinucleotide + diphosphate. In terms of biological role, transfers a GMP moiety from GTP to Mo-molybdopterin (Mo-MPT) cofactor (Moco or molybdenum cofactor) to form Mo-molybdopterin guanine dinucleotide (Mo-MGD) cofactor. The chain is Molybdenum cofactor guanylyltransferase from Helicobacter pylori (strain G27).